The following is a 107-amino-acid chain: C-X-C motif chemokine 2 (107 aa).

An N-terminal signal peptide occupies residues 1-34; it reads MARATLSAAPSNPRLLRVALLLLLLVAASRRAAG. 2 cysteine pairs are disulfide-bonded: cysteine 43/cysteine 69 and cysteine 45/cysteine 85.

The protein belongs to the intercrine alpha (chemokine CxC) family. Post-translationally, the N-terminal processed form GRO-beta(5-73) is produced by proteolytic cleavage after secretion from bone marrow stromal cells.

The protein resides in the secreted. Functionally, produced by activated monocytes and neutrophils and expressed at sites of inflammation. Hematoregulatory chemokine, which, in vitro, suppresses hematopoietic progenitor cell proliferation. GRO-beta(5-73) shows a highly enhanced hematopoietic activity. This chain is C-X-C motif chemokine 2 (CXCL2), found in Homo sapiens (Human).